Consider the following 649-residue polypeptide: Glucan endo-1,3-beta-glucosidase btgC (649 aa).

Disordered stretches follow at residues 1-50 (MGDR…AHTH) and 110-224 (YHTT…AGGA). Residues 1–274 (MGDRSEQYGD…PRPSGASRKR (274 aa)) are Cytoplasmic-facing. A compositionally biased stretch (low complexity) spans 144–157 (GSSAALSAAGAPAG). The segment covering 198-208 (NPDDILDDGDD) has biased composition (acidic residues). A helical; Signal-anchor for type II membrane protein membrane pass occupies residues 275–295 (GWIIGGILAFIVIGAIVGGAV). Residues 296–649 (GGTLGNRRSE…IPDCGGKTAA (354 aa)) are Extracellular-facing. The disordered stretch occupies residues 301 to 329 (NRRSETASESSEVSADDDTETNGDLDKNS). The span at 314–323 (SADDDTETNG) shows a compositional bias: acidic residues. 3 N-linked (GlcNAc...) asparagine glycosylation sites follow: asparagine 369, asparagine 392, and asparagine 420. Residue glutamate 452 is the Proton donor of the active site. Glutamate 551 serves as the catalytic Nucleophile. Asparagine 596 carries an N-linked (GlcNAc...) asparagine glycan.

This sequence belongs to the glycosyl hydrolase 17 family.

It localises to the cell membrane. The enzyme catalyses Hydrolysis of (1-&gt;3)-beta-D-glucosidic linkages in (1-&gt;3)-beta-D-glucans.. Its function is as follows. Glucanases play a role in cell expansion during growth, in cell-cell fusion during mating, and in spore release during sporulation. This enzyme may be involved in beta-glucan degradation. Active on laminarin and lichenan. The sequence is that of Glucan endo-1,3-beta-glucosidase btgC (btgC) from Emericella nidulans (strain FGSC A4 / ATCC 38163 / CBS 112.46 / NRRL 194 / M139) (Aspergillus nidulans).